Consider the following 104-residue polypeptide: Protein RnfH (104 aa).

This sequence belongs to the UPF0125 (RnfH) family.

In Pseudomonas fluorescens (strain Pf0-1), this protein is Protein RnfH.